The chain runs to 293 residues: Ribosomal protein L11 methyltransferase (293 aa).

S-adenosyl-L-methionine contacts are provided by T145, G166, D188, and N230.

Belongs to the methyltransferase superfamily. PrmA family.

The protein resides in the cytoplasm. The catalysed reaction is L-lysyl-[protein] + 3 S-adenosyl-L-methionine = N(6),N(6),N(6)-trimethyl-L-lysyl-[protein] + 3 S-adenosyl-L-homocysteine + 3 H(+). Its function is as follows. Methylates ribosomal protein L11. The protein is Ribosomal protein L11 methyltransferase of Escherichia coli O7:K1 (strain IAI39 / ExPEC).